A 184-amino-acid chain; its full sequence is Cytidylate kinase (184 aa).

8–16 (GQPGSGKTT) contacts ATP.

Belongs to the cytidylate kinase family. Type 2 subfamily.

It localises to the cytoplasm. It carries out the reaction CMP + ATP = CDP + ADP. The enzyme catalyses dCMP + ATP = dCDP + ADP. This chain is Cytidylate kinase, found in Pyrobaculum neutrophilum (strain DSM 2338 / JCM 9278 / NBRC 100436 / V24Sta) (Thermoproteus neutrophilus).